A 260-amino-acid polypeptide reads, in one-letter code: Tropinone reductase homolog At1g07450 (260 aa).

Residue 14-38 (LVTGGSKGIGYAIVEELVGFGARVH) participates in NADP(+) binding. Residue serine 147 coordinates substrate. Catalysis depends on tyrosine 159, which acts as the Proton acceptor.

The protein belongs to the short-chain dehydrogenases/reductases (SDR) family. SDR65C subfamily.

This chain is Tropinone reductase homolog At1g07450, found in Arabidopsis thaliana (Mouse-ear cress).